The following is a 710-amino-acid chain: Homeobox-leucine zipper protein ROC8 (710 aa).

A disordered region spans residues 1-23 (MDFGDEPEGSDSQRRRKRYHRHT). Residues 14–23 (RRRKRYHRHT) show a composition bias toward basic residues. A DNA-binding region (homeobox) is located at residues 15–74 (RRKRYHRHTPRQIQQLEAMFKECPHPDENQRAQLSRELGLEPRQIKFWFQNRRTQMKAQH). Residues 82–144 (LRAENDKIRC…DRVSNLTSKY (63 aa)) are a coiled coil. The 244-residue stretch at 197-440 (SDMERPMMAE…LQRACERYAS (244 aa)) folds into the START domain. Residues 630 to 648 (RPGSAAGASTSSAGPLAAA) are compositionally biased toward low complexity. The disordered stretch occupies residues 630-650 (RPGSAAGASTSSAGPLAAARG).

It belongs to the HD-ZIP homeobox family. Class IV subfamily.

It is found in the nucleus. Functionally, probable transcription factor. The polypeptide is Homeobox-leucine zipper protein ROC8 (ROC8) (Oryza sativa subsp. japonica (Rice)).